The primary structure comprises 530 residues: Autoinducer-2 kinase (530 aa).

The protein belongs to the FGGY kinase family.

The protein resides in the cytoplasm. The enzyme catalyses (S)-4,5-dihydroxypentane-2,3-dione + ATP = (2S)-2-hydroxy-3,4-dioxopentyl phosphate + ADP + H(+). Catalyzes the phosphorylation of autoinducer-2 (AI-2) to phospho-AI-2, which subsequently inactivates the transcriptional regulator LsrR and leads to the transcription of the lsr operon. Phosphorylates the ring-open form of (S)-4,5-dihydroxypentane-2,3-dione (DPD), which is the precursor to all AI-2 signaling molecules, at the C5 position. The chain is Autoinducer-2 kinase from Yersinia pestis bv. Antiqua (strain Angola).